A 476-amino-acid chain; its full sequence is Protein transport protein Sec61 subunit alpha (476 aa).

The Cytoplasmic segment spans residues 2 to 33; that stretch reads GIKFLEVIKPFCAVLPEIQKPERKIQFREKVL. Residues 34–53 form a helical membrane-spanning segment; it reads WTAITLFIFLVCCQIPLFGI. Over 54–76 the chain is Lumenal; it reads MSSDSADPFYWMRVILASNRGTL. A helical transmembrane segment spans residues 77 to 96; it reads MELGISPIVTSGLIMQLLAG. Residues 97 to 117 are Cytoplasmic-facing; the sequence is AKIIGVGDTPKDRALFNGAQK. The helical transmembrane segment at 118 to 138 threads the bilayer; that stretch reads LFGMIITIGQAIVYVMTGMYG. Topologically, residues 139-144 are lumenal; the sequence is DPSEMG. The chain crosses the membrane as a helical span at residues 145 to 165; that stretch reads AGICLLIIIQLFVAGLIVLLL. Topologically, residues 166–172 are cytoplasmic; sequence DELLQKG. A helical membrane pass occupies residues 173 to 193; it reads YGLGSGISLFIATNICETIVW. Residues 194–240 are Lumenal-facing; the sequence is KAFSPTTVNTGRGTEFEGAIIALFHLLATRTDKVRALREGFYRQNLP. Residues 241 to 261 form a helical membrane-spanning segment; that stretch reads NLMNLIATVFVFAVVIYFQGF. The Cytoplasmic segment spans residues 262–288; sequence RVDLPIKSARYRGQYNTYPIKLFYTSN. Residues 289–309 form a helical membrane-spanning segment; it reads IPIILQSALVSNLYVISQMLS. The Lumenal portion of the chain corresponds to 310 to 354; that stretch reads TRFSGNFLVNLLGTWSDATSGGPARAYPVAGLCYYLSPPESFGSV. A helical membrane pass occupies residues 355-375; that stretch reads LDDPVHAGIYIVFMLGSCAFF. Residues 376-420 are Cytoplasmic-facing; that stretch reads SKTWIEVSGSSAKDVAKQLKEQQMVMRGHRETSMVHELNRYIPTA. Residues 421–441 traverse the membrane as a helical segment; the sequence is AAFGGLCIGGLSVMADFLGAI. Over 442 to 445 the chain is Lumenal; sequence GSGT. The chain crosses the membrane as a helical span at residues 446 to 462; sequence GILLAVTIIYQYFEIFV. At 463–476 the chain is on the cytoplasmic side; sequence KEQSEVGSMGALLF.

The protein belongs to the SecY/SEC61-alpha family. The SEC61 channel-forming translocon complex consists of channel-forming core components SEC61A1, SEC61B and SEC61G and different auxiliary components such as SEC62 and SEC63. The SEC61 channel associates with the multi-pass translocon (MPT) complex.

It localises to the endoplasmic reticulum membrane. In terms of biological role, component of SEC61 channel-forming translocon complex that mediates transport of signal peptide-containing precursor polypeptides across the endoplasmic reticulum (ER). Forms a ribosome receptor and a gated pore in the ER membrane, both functions required for cotranslational translocation of nascent polypeptides. May cooperate with auxiliary protein SEC62, SEC63 and HSPA5/BiP to enable post-translational transport of small presecretory proteins. The SEC61 channel is also involved in ER membrane insertion of transmembrane proteins: it mediates membrane insertion of the first few transmembrane segments of proteins, while insertion of subsequent transmembrane regions of multi-pass membrane proteins is mediated by the multi-pass translocon (MPT) complex. In Hemitripterus americanus (Sea raven), this protein is Protein transport protein Sec61 subunit alpha (sec61a).